The following is a 302-amino-acid chain: Urease accessory protein UreD 2 (302 aa).

This sequence belongs to the UreD family. In terms of assembly, ureD, UreF and UreG form a complex that acts as a GTP-hydrolysis-dependent molecular chaperone, activating the urease apoprotein by helping to assemble the nickel containing metallocenter of UreC. The UreE protein probably delivers the nickel.

The protein resides in the cytoplasm. Its function is as follows. Required for maturation of urease via the functional incorporation of the urease nickel metallocenter. In Brucella canis (strain ATCC 23365 / NCTC 10854 / RM-666), this protein is Urease accessory protein UreD 2.